A 209-amino-acid chain; its full sequence is Kynurenine formamidase (209 aa).

F18 contributes to the substrate binding site. Positions 48, 52, and 54 each coordinate Zn(2+). The active-site Proton donor/acceptor is H58. Zn(2+) contacts are provided by H160 and E172.

The protein belongs to the Cyclase 1 superfamily. KynB family. Homodimer. Zn(2+) serves as cofactor.

It carries out the reaction N-formyl-L-kynurenine + H2O = L-kynurenine + formate + H(+). It participates in amino-acid degradation; L-tryptophan degradation via kynurenine pathway; L-kynurenine from L-tryptophan: step 2/2. Its function is as follows. Catalyzes the hydrolysis of N-formyl-L-kynurenine to L-kynurenine, the second step in the kynurenine pathway of tryptophan degradation. This Bordetella bronchiseptica (strain ATCC BAA-588 / NCTC 13252 / RB50) (Alcaligenes bronchisepticus) protein is Kynurenine formamidase.